Consider the following 655-residue polypeptide: Kelch-like protein 13 (655 aa).

Residues 92 to 161 form the BTB domain; the sequence is CDVTLMPGDT…IYTAKLSLNM (70 aa). Residues 196-297 enclose the BACK domain; sequence CVEVGRIANT…TPQELINYVQ (102 aa). Kelch repeat units lie at residues 341 to 389, 390 to 441, 442 to 488, 490 to 535, 537 to 587, and 588 to 636; these read HLVT…VIGN, FLYV…ALKG, YLYA…VYGG, MYIS…TVGE, LYVI…VFEN, and KIYV…TLTV.

In terms of assembly, component of the BCR(KLHL9-KLHL13) E3 ubiquitin ligase complex, at least composed of CUL3, KLHL9, KLHL13 and RBX1. Interacts with AURKB.

It functions in the pathway protein modification; protein ubiquitination. Its function is as follows. Substrate-specific adapter of a BCR (BTB-CUL3-RBX1) E3 ubiquitin-protein ligase complex required for mitotic progression and cytokinesis. The BCR(KLHL9-KLHL13) E3 ubiquitin ligase complex mediates the ubiquitination of AURKB and controls the dynamic behavior of AURKB on mitotic chromosomes and thereby coordinates faithful mitotic progression and completion of cytokinesis. This Homo sapiens (Human) protein is Kelch-like protein 13 (KLHL13).